A 182-amino-acid chain; its full sequence is Ribosome maturation factor RimM (182 aa).

Residues 102–182 (GEGDYYWKDL…TIEVDWDPGF (81 aa)) enclose the PRC barrel domain.

This sequence belongs to the RimM family. In terms of assembly, binds ribosomal protein uS19.

The protein resides in the cytoplasm. An accessory protein needed during the final step in the assembly of 30S ribosomal subunit, possibly for assembly of the head region. Essential for efficient processing of 16S rRNA. May be needed both before and after RbfA during the maturation of 16S rRNA. It has affinity for free ribosomal 30S subunits but not for 70S ribosomes. The sequence is that of Ribosome maturation factor RimM from Pectobacterium carotovorum subsp. carotovorum (strain PC1).